Consider the following 285-residue polypeptide: MQEASGLAPAPLPFQGRAMSLRETAYAKINLALHVRRRRDDGYHELETLFAFVDAGDELTAKPAPADSLRVFGEFGGALDDPFGNIVAKALGTLPHGEGWAVTLEKHLPVAAGLGGGSADAGAVFRMVERSHGLPADWHARAARLGADVPACVESAACIGRGTGTELEPIPNDLAGTPVLLVNPRIPLATGPVFKAWDGVDRGALEGATAREVAFAGRNDLEAPALSLVPEIGAVLVTLRQTGGWLTRMSGSGATCFALYDTPEQRDLAQAAMPPSWWTLGGALR.

Residue lysine 28 is part of the active site. Residue 109–119 participates in ATP binding; it reads PVAAGLGGGSA. Aspartate 148 is a catalytic residue.

Belongs to the GHMP kinase family. IspE subfamily.

The enzyme catalyses 4-CDP-2-C-methyl-D-erythritol + ATP = 4-CDP-2-C-methyl-D-erythritol 2-phosphate + ADP + H(+). It participates in isoprenoid biosynthesis; isopentenyl diphosphate biosynthesis via DXP pathway; isopentenyl diphosphate from 1-deoxy-D-xylulose 5-phosphate: step 3/6. Catalyzes the phosphorylation of the position 2 hydroxy group of 4-diphosphocytidyl-2C-methyl-D-erythritol. This chain is 4-diphosphocytidyl-2-C-methyl-D-erythritol kinase, found in Novosphingobium aromaticivorans (strain ATCC 700278 / DSM 12444 / CCUG 56034 / CIP 105152 / NBRC 16084 / F199).